A 133-amino-acid polypeptide reads, in one-letter code: Holo-[acyl-carrier-protein] synthase (133 aa).

Asp-8 and Glu-57 together coordinate Mg(2+).

This sequence belongs to the P-Pant transferase superfamily. AcpS family. It depends on Mg(2+) as a cofactor.

The protein resides in the cytoplasm. The enzyme catalyses apo-[ACP] + CoA = holo-[ACP] + adenosine 3',5'-bisphosphate + H(+). Its function is as follows. Transfers the 4'-phosphopantetheine moiety from coenzyme A to a Ser of acyl-carrier-protein. This is Holo-[acyl-carrier-protein] synthase from Caulobacter sp. (strain K31).